We begin with the raw amino-acid sequence, 740 residues long: UvrABC system protein B (740 aa).

Positions 1-36 (MTIAIRTTLDEPENHSDFVPHRPSRPEKTEPSKPFR) are disordered. Basic and acidic residues predominate over residues 8–33 (TLDEPENHSDFVPHRPSRPEKTEPSK). The Helicase ATP-binding domain maps to 56-444 (KDIQKGERDQ…GGVFVEQIIR (389 aa)). An ATP-binding site is contributed by 69–76 (GVTGSGKT). The Beta-hairpin signature appears at 122 to 145 (YYDYYQPEAYVPRTDTYIEKDSAI). Positions 461 to 627 (QVDNLIFEAK…TVKRQVDDIV (167 aa)) constitute a Helicase C-terminal domain. In terms of domain architecture, UVR spans 651-686 (ARSISETEKEMLEAAANLEFEKAAQLRDVLHQLKRQ). The disordered stretch occupies residues 687–740 (ELGLPPEKSSEIQGRSEAGRPGTRKTRSDKAREAKASKRVKQEAGEKLLRSRGH). Basic and acidic residues predominate over residues 712 to 740 (TRSDKAREAKASKRVKQEAGEKLLRSRGH).

It belongs to the UvrB family. In terms of assembly, forms a heterotetramer with UvrA during the search for lesions. Interacts with UvrC in an incision complex.

It localises to the cytoplasm. Functionally, the UvrABC repair system catalyzes the recognition and processing of DNA lesions. A damage recognition complex composed of 2 UvrA and 2 UvrB subunits scans DNA for abnormalities. Upon binding of the UvrA(2)B(2) complex to a putative damaged site, the DNA wraps around one UvrB monomer. DNA wrap is dependent on ATP binding by UvrB and probably causes local melting of the DNA helix, facilitating insertion of UvrB beta-hairpin between the DNA strands. Then UvrB probes one DNA strand for the presence of a lesion. If a lesion is found the UvrA subunits dissociate and the UvrB-DNA preincision complex is formed. This complex is subsequently bound by UvrC and the second UvrB is released. If no lesion is found, the DNA wraps around the other UvrB subunit that will check the other stand for damage. This is UvrABC system protein B from Zymomonas mobilis subsp. mobilis (strain ATCC 31821 / ZM4 / CP4).